Reading from the N-terminus, the 405-residue chain is MGFGKKKVSYFYDEDVGNYHYGPQHPMKPHRVRMVHNLVVNYNLYEKLNVITPVRATRNDMTRCHTDEYIEFLWRVTPDTMEKFQPHQLKFNVGDDCPVFDGLYEFCSISAGGSIGAAQELNSGNAEIAINWAGGLHHAKKREASGFCYVNDIALAALELLKYHQRVLYIDIDVHHGDGVEEFFYTTDRVMTCSFHKFGEYFPGTGHIKDTGIGTGKNYAVNVPLRDGIDDESYESVFKPVISHIMQWFRPEAVILQCGTDSLAGDRLGCFNLSMKGHSMCVDFVKSFNLPMICVGGGGYTVRNVARVWTYETGLLAGEELDENLPYNDYLQYYGPDYKLNVLSNNMENHNTRQYLDSITSEIIENLRNLSFAPSVQMHKTPGDFTFENAEKQNIAKEEIMDERV.

Positions 6 to 318 (KKVSYFYDED…WTYETGLLAG (313 aa)) are histone deacetylase. Residue His138 is part of the active site.

The protein belongs to the histone deacetylase family. HD type 1 subfamily. Heterotetramer of alp13, clr6, prw1 and pst2.

It is found in the nucleus. It catalyses the reaction N(6)-acetyl-L-lysyl-[histone] + H2O = L-lysyl-[histone] + acetate. In terms of biological role, responsible for the deacetylation of lysine residues on the N-terminal part of the core histones (H2A, H2B, H3 and H4). Histone deacetylation gives a tag for epigenetic repression and plays an important role in transcriptional regulation, cell cycle progression and developmental events. Histone deacetylases act via the formation of large multiprotein complexes. Has a role in chromatin assembly and chromosome segregation. The sequence is that of Histone deacetylase clr6 (clr6) from Schizosaccharomyces pombe (strain 972 / ATCC 24843) (Fission yeast).